The following is a 59-amino-acid chain: Cecropin-B1 (59 aa).

The first 23 residues, 1–23 (MNFNKLFLIVILAALLLLGQTEA), serve as a signal peptide directing secretion. Leucine 57 carries the leucine amide modification.

The protein belongs to the cecropin family.

The protein resides in the secreted. Its function is as follows. Cecropins have lytic and antibacterial activity against several Gram-positive and Gram-negative bacteria. This is Cecropin-B1 (CECB1) from Culex pipiens pipiens (Northern house mosquito).